A 148-amino-acid polypeptide reads, in one-letter code: Transcription antitermination protein NusB (148 aa).

Belongs to the NusB family.

Functionally, involved in transcription antitermination. Required for transcription of ribosomal RNA (rRNA) genes. Binds specifically to the boxA antiterminator sequence of the ribosomal RNA (rrn) operons. In Saccharopolyspora erythraea (strain ATCC 11635 / DSM 40517 / JCM 4748 / NBRC 13426 / NCIMB 8594 / NRRL 2338), this protein is Transcription antitermination protein NusB.